A 54-amino-acid polypeptide reads, in one-letter code: Ovomucoid (54 aa).

A Kazal-like domain is found at 4 to 54 (VDCSDYPKPSCTLEDKPLCGSDNQTYSNKCSFCNAVVDSNGTLTLSHFGKC). Intrachain disulfides connect Cys6-Cys36, Cys14-Cys33, and Cys22-Cys54. Asn43 is a glycosylation site (N-linked (GlcNAc...) asparagine).

Its subcellular location is the secreted. The protein is Ovomucoid of Megapodius freycinet (Dusky scrubfowl).